The following is a 217-amino-acid chain: Dephospho-CoA kinase (217 aa).

Residues 4 to 203 (IVALTGGISS…SHLSRIYNKN (200 aa)) form the DPCK domain. Position 12 to 17 (12 to 17 (SSGKTT)) interacts with ATP.

This sequence belongs to the CoaE family.

The protein localises to the cytoplasm. The catalysed reaction is 3'-dephospho-CoA + ATP = ADP + CoA + H(+). The protein operates within cofactor biosynthesis; coenzyme A biosynthesis; CoA from (R)-pantothenate: step 5/5. Its function is as follows. Catalyzes the phosphorylation of the 3'-hydroxyl group of dephosphocoenzyme A to form coenzyme A. This Buchnera aphidicola subsp. Acyrthosiphon pisum (strain APS) (Acyrthosiphon pisum symbiotic bacterium) protein is Dephospho-CoA kinase.